Reading from the N-terminus, the 284-residue chain is Bifunctional protein FolD (284 aa).

NADP(+) is bound by residues 166–168 (GAS) and I232.

The protein belongs to the tetrahydrofolate dehydrogenase/cyclohydrolase family. Homodimer.

The catalysed reaction is (6R)-5,10-methylene-5,6,7,8-tetrahydrofolate + NADP(+) = (6R)-5,10-methenyltetrahydrofolate + NADPH. It carries out the reaction (6R)-5,10-methenyltetrahydrofolate + H2O = (6R)-10-formyltetrahydrofolate + H(+). Its pathway is one-carbon metabolism; tetrahydrofolate interconversion. Catalyzes the oxidation of 5,10-methylenetetrahydrofolate to 5,10-methenyltetrahydrofolate and then the hydrolysis of 5,10-methenyltetrahydrofolate to 10-formyltetrahydrofolate. This chain is Bifunctional protein FolD, found in Shewanella frigidimarina (strain NCIMB 400).